The following is a 94-amino-acid chain: Neutrophil defensin 3 (94 aa).

Residues 1-19 (MRTLAILAAILLVALQAQA) form the signal peptide. A propeptide spanning residues 20 to 38 (EPLQARADEVAAAPEQIAA) is cleaved from the precursor. 3 disulfides stabilise this stretch: C66-C94, C68-C83, and C73-C93.

It belongs to the alpha-defensin family. In terms of assembly, dimer. (Microbial infection) Interacts with herpes virus 1 HHV-1 envelope glycoprotein B; this interaction inhibits viral infection.

The protein resides in the secreted. Its function is as follows. Effector molecule of the innate immune system that acts via antibiotic-like properties against a broad array of infectious agents including bacteria, fungi, and viruses. Possesses the ability to neutralize bacterial toxins such as B.anthracis lethal factor, Clostridium difficile cytotoxin B as well as leukocidin produced by Staphylococcus aureus. Also blocks herpes simplex virus infection by interacting with envelope glycoprotein B and thus preventing its binding to heparan sulfate, the receptor for attachment. The protein is Neutrophil defensin 3 (DEFA3) of Homo sapiens (Human).